A 301-amino-acid chain; its full sequence is Cytosolic sulfotransferase 3 (301 aa).

53–58 (KAGTTW) lines the 3'-phosphoadenylyl sulfate pocket. The active-site Proton acceptor is histidine 115. 3'-phosphoadenylyl sulfate-binding positions include arginine 137, serine 145, tyrosine 201, 235 to 240 (VQFDAM), and 263 to 265 (RKG).

This sequence belongs to the sulfotransferase 1 family.

The protein resides in the cytoplasm. Its activity is regulated as follows. Inhibited by Hg(2+), Co(2+), Zn(2+), Cd(2+), Cu(2+) and Pb(2+) ions. Activated slightly by Mn(2+), Ca(2+) and Mg(2+) ions. Its function is as follows. Sulfotransferase that utilizes 3'-phospho-5'-adenylyl sulfate (PAPS) as sulfonate donor to catalyze the sulfate conjugation of a variety of xenobiotic and endogenous compounds, including dopamine, T3 (triiodo-L-thyronine), T4 (thyroxine), estrone, DHEA (dehydroepiandrosterone), flavonoids, isoflavonoids and other phenolic compounds. This chain is Cytosolic sulfotransferase 3, found in Danio rerio (Zebrafish).